The following is a 597-amino-acid chain: MGKTPSPGKWIKSLLGKKSSKSSLEKGGEKLRSAKKEELVVKVKDNNVSKLPTEPPVVSSQEVAATQTVVVPDVVIAEKQLSGDIEGDESSNVNLESGNDSEEVKLEEAATKVQAALRAQQAREESQNLKGITRVQAVIRGHLVRRQAVATYSCIWGIVKVQALVRGKKARSSETVAQLQKTNTETETSETLQGSTYSWMENPTKLSMIDKLLVSSPTTLPLKIQYSPEDPNSAKVWLGRWTQLQVWAPGPLVVKNLVPKSQTKKRSFQAVEAEKGKLKRGVRKPTGVSTTANSSTSRSTADNEKPKRTVRKASTLGKELSKIENDKSKQSSRKSTSAIKEGSSVEVKDEKPRISHKKASLSNGIGKATRKSAEKKKEIADAVQKELPIEEVSVSLVDAPEDEKMNLIPVTISKESDLDKDEKSLVLDKPEQDELRTAERDDKAEEELKTAERDDSAEEKIQEPDAQISSENGNVASENTKPSDRRASLPAKIENHHQDDGLTQSGRKIPSYMAPTASAKARIRGQGSPRIAQEKPEKNGTTRRHSLPPAANGKLSTMSPRAHRLLIASAKGSMNSDRSFSSSKDIGDKSTKAEWKR.

The interval 1–31 is disordered; it reads MGKTPSPGKWIKSLLGKKSSKSSLEKGGEKL. 3 IQ domains span residues 106–134, 135–153, and 157–183; these read LEEA…GITR, VQAV…ATYS, and GIVK…QKTN. The segment at 159–173 is calmodulin-binding; the sequence is VKVQALVRGKKARSS. The Nuclear localization signal 1 signature appears at 264 to 271; the sequence is KKRSFQAV. Disordered stretches follow at residues 268–379 and 407–597; these read FQAV…KKEI and LIPV…EWKR. Positions 289-300 are enriched in low complexity; it reads STTANSSTSRST. The span at 319-329 shows a compositional bias: basic and acidic residues; the sequence is ELSKIENDKSK. Residues 356-363 carry the Nuclear localization signal 2 motif; the sequence is HKKASLSN. Positions 414-463 are enriched in basic and acidic residues; sequence KESDLDKDEKSLVLDKPEQDELRTAERDDKAEEELKTAERDDSAEEKIQE. Residues 467–480 are compositionally biased toward polar residues; that stretch reads QISSENGNVASENT. Over residues 481 to 500 the composition is skewed to basic and acidic residues; sequence KPSDRRASLPAKIENHHQDD. Polar residues predominate over residues 572-584; the sequence is GSMNSDRSFSSSK. Basic and acidic residues predominate over residues 585 to 597; the sequence is DIGDKSTKAEWKR.

This sequence belongs to the IQD family. Binds to multiple calmodulin (CaM) in the presence of Ca(2+) and CaM-like proteins.

The protein localises to the nucleus. It localises to the nucleus envelope. Its subcellular location is the cytoplasm. The protein resides in the cytoskeleton. It is found in the cell membrane. In terms of biological role, may be involved in cooperative interactions with calmodulins or calmodulin-like proteins. Recruits calmodulin proteins to microtubules, thus being a potential scaffold in cellular signaling and trafficking. May associate with nucleic acids and regulate gene expression at the transcriptional or post-transcriptional level. The sequence is that of Protein IQ-DOMAIN 29 from Arabidopsis thaliana (Mouse-ear cress).